The sequence spans 384 residues: Multidrug/solvent efflux pump periplasmic linker protein MepA (384 aa).

A signal peptide spans 1–22 (MQFKPAVTALVSAVALATLLSG). The N-palmitoyl cysteine moiety is linked to residue Cys-23. The S-diacylglycerol cysteine moiety is linked to residue Cys-23. A coiled-coil region spans residues 115 to 155 (LAERYKQLIDEQAVSKQEYDDANAKRLQAEASLKSAQIDLR). Positions 362–384 (ATNVKKPAGPDQANAAKADAKAE) are disordered. Low complexity predominate over residues 368–378 (PAGPDQANAAK).

This sequence belongs to the membrane fusion protein (MFP) (TC 8.A.1) family.

The protein resides in the cell inner membrane. Its function is as follows. The periplasmic linker protein component of an organic solvent and antibiotic efflux pump; confers resistance to toluene, hexane, p-xylene, ampicillin, penicillin G, erythromycin, novobiocin and tetracycline. The chain is Multidrug/solvent efflux pump periplasmic linker protein MepA (mepA) from Pseudomonas putida (Arthrobacter siderocapsulatus).